The chain runs to 194 residues: High mobility group protein B4 (194 aa).

2 consecutive DNA-binding regions (HMG box) follow at residues 9 to 79 (PKAN…MNYF) and 93 to 161 (PRRP…SVYR).

The protein belongs to the HMGB family.

The protein resides in the nucleus. It localises to the chromosome. This Bos taurus (Bovine) protein is High mobility group protein B4 (HMGB4).